Reading from the N-terminus, the 252-residue chain is 2-succinyl-6-hydroxy-2,4-cyclohexadiene-1-carboxylate synthase (252 aa).

It belongs to the AB hydrolase superfamily. MenH family. Monomer.

The enzyme catalyses 5-enolpyruvoyl-6-hydroxy-2-succinyl-cyclohex-3-ene-1-carboxylate = (1R,6R)-6-hydroxy-2-succinyl-cyclohexa-2,4-diene-1-carboxylate + pyruvate. Its pathway is quinol/quinone metabolism; 1,4-dihydroxy-2-naphthoate biosynthesis; 1,4-dihydroxy-2-naphthoate from chorismate: step 3/7. It functions in the pathway quinol/quinone metabolism; menaquinone biosynthesis. Its function is as follows. Catalyzes a proton abstraction reaction that results in 2,5-elimination of pyruvate from 2-succinyl-5-enolpyruvyl-6-hydroxy-3-cyclohexene-1-carboxylate (SEPHCHC) and the formation of 2-succinyl-6-hydroxy-2,4-cyclohexadiene-1-carboxylate (SHCHC). This is 2-succinyl-6-hydroxy-2,4-cyclohexadiene-1-carboxylate synthase from Escherichia fergusonii (strain ATCC 35469 / DSM 13698 / CCUG 18766 / IAM 14443 / JCM 21226 / LMG 7866 / NBRC 102419 / NCTC 12128 / CDC 0568-73).